The chain runs to 193 residues: MNKDHEEQLEINEVSQKNKYKSIIESLLFMSGEPINIKDLATILNCKQDKVSSLLNEMNNSYVGKDRGIKILIHNRAVQLVTKPENSIYVEKLLKTNVRQSLSQAALETLSIIAYKQPITRVAIDEIRGVKSDRAIYTLLEKNIIKECGRLDVPGKPILYGTTEEFLKFFGLDSIEAIPNLEDLLKEFSKEEN.

This sequence belongs to the ScpB family. Homodimer. Homodimerization may be required to stabilize the binding of ScpA to the Smc head domains. Component of a cohesin-like complex composed of ScpA, ScpB and the Smc homodimer, in which ScpA and ScpB bind to the head domain of Smc. The presence of the three proteins is required for the association of the complex with DNA.

Its subcellular location is the cytoplasm. Its function is as follows. Participates in chromosomal partition during cell division. May act via the formation of a condensin-like complex containing Smc and ScpA that pull DNA away from mid-cell into both cell halves. This Clostridium botulinum (strain ATCC 19397 / Type A) protein is Segregation and condensation protein B.